The sequence spans 237 residues: Orotidine 5'-phosphate decarboxylase (237 aa).

Substrate-binding positions include Asp-10, Lys-32, 59-68, Thr-118, Arg-180, Gln-189, Gly-209, and Arg-210; that span reads DLKLHDIPNT. The Proton donor role is filled by Lys-61.

This sequence belongs to the OMP decarboxylase family. Type 1 subfamily. Homodimer.

It carries out the reaction orotidine 5'-phosphate + H(+) = UMP + CO2. It participates in pyrimidine metabolism; UMP biosynthesis via de novo pathway; UMP from orotate: step 2/2. Functionally, catalyzes the decarboxylation of orotidine 5'-monophosphate (OMP) to uridine 5'-monophosphate (UMP). This Fusobacterium nucleatum subsp. nucleatum (strain ATCC 25586 / DSM 15643 / BCRC 10681 / CIP 101130 / JCM 8532 / KCTC 2640 / LMG 13131 / VPI 4355) protein is Orotidine 5'-phosphate decarboxylase.